We begin with the raw amino-acid sequence, 156 residues long: Endoribonuclease YbeY (156 aa).

Zn(2+) is bound by residues H122, H126, and H132.

Belongs to the endoribonuclease YbeY family. It depends on Zn(2+) as a cofactor.

It is found in the cytoplasm. Its function is as follows. Single strand-specific metallo-endoribonuclease involved in late-stage 70S ribosome quality control and in maturation of the 3' terminus of the 16S rRNA. This chain is Endoribonuclease YbeY, found in Pediococcus pentosaceus (strain ATCC 25745 / CCUG 21536 / LMG 10740 / 183-1w).